The primary structure comprises 107 residues: Nucleoid-associated protein GOX0603 (107 aa).

This sequence belongs to the YbaB/EbfC family. In terms of assembly, homodimer.

The protein resides in the cytoplasm. It is found in the nucleoid. Functionally, binds to DNA and alters its conformation. May be involved in regulation of gene expression, nucleoid organization and DNA protection. The polypeptide is Nucleoid-associated protein GOX0603 (Gluconobacter oxydans (strain 621H) (Gluconobacter suboxydans)).